The primary structure comprises 406 residues: L-carnitine CoA-transferase (406 aa).

Residues Lys-98 and Arg-105 each contribute to the CoA site. Asp-170 functions as the Nucleophile in the catalytic mechanism.

It belongs to the CoA-transferase III family. CaiB subfamily. Homodimer.

It is found in the cytoplasm. The catalysed reaction is crotonobetainyl-CoA + (R)-carnitine = crotonobetaine + (R)-carnitinyl-CoA. It catalyses the reaction 4-(trimethylamino)butanoyl-CoA + (R)-carnitine = (R)-carnitinyl-CoA + 4-(trimethylamino)butanoate. It functions in the pathway amine and polyamine metabolism; carnitine metabolism. In terms of biological role, catalyzes the reversible transfer of the CoA moiety from gamma-butyrobetainyl-CoA to L-carnitine to generate L-carnitinyl-CoA and gamma-butyrobetaine. Is also able to catalyze the reversible transfer of the CoA moiety from gamma-butyrobetainyl-CoA or L-carnitinyl-CoA to crotonobetaine to generate crotonobetainyl-CoA. The sequence is that of L-carnitine CoA-transferase from Proteus mirabilis (strain HI4320).